Reading from the N-terminus, the 292-residue chain is 4-hydroxy-tetrahydrodipicolinate synthase (292 aa).

Residue threonine 45 participates in pyruvate binding. Residue tyrosine 133 is the Proton donor/acceptor of the active site. The active-site Schiff-base intermediate with substrate is lysine 161. Residue isoleucine 203 coordinates pyruvate.

This sequence belongs to the DapA family. Homotetramer; dimer of dimers.

The protein resides in the cytoplasm. The catalysed reaction is L-aspartate 4-semialdehyde + pyruvate = (2S,4S)-4-hydroxy-2,3,4,5-tetrahydrodipicolinate + H2O + H(+). It functions in the pathway amino-acid biosynthesis; L-lysine biosynthesis via DAP pathway; (S)-tetrahydrodipicolinate from L-aspartate: step 3/4. Its function is as follows. Catalyzes the condensation of (S)-aspartate-beta-semialdehyde [(S)-ASA] and pyruvate to 4-hydroxy-tetrahydrodipicolinate (HTPA). The sequence is that of 4-hydroxy-tetrahydrodipicolinate synthase from Vibrio cholerae serotype O1 (strain ATCC 39541 / Classical Ogawa 395 / O395).